Reading from the N-terminus, the 260-residue chain is MSIRIKIDKLRQIVAYFSEFSEEVSINVDSTDELMYIFAALGGSVNIWAIIPLSASVFYRGAENIVFNLPVSKVKSCLCSFHNDAIIDIEPDLENNLVKLSSYHVVSVDCNKELMPIRTDTTICLSIDQKKSYVFNFHKYEEKCCGRTVIHLEWLLGFIKCISQHQHLTIMFKDDNIIMKTPGNTDAFSREYSMTECSQELQKFSFKIAISSLNKLRGFKKRVNVFETRIVMDNDDNILGMLFSDRVQSFKINIFMAFLD.

This sequence belongs to the chordopoxvirinae VLTF-1 family. In terms of assembly, interacts with the late transcription factors VLTF-2 and VLTF-3. Interacts with the late transcription elongation factor VLTF-4. Interacts with itself.

Functionally, associates with RNA polymerase to initiate transcription from late gene promoters. This Homo sapiens (Human) protein is Late transcription factor 1 (OPG093).